The following is a 153-amino-acid chain: Deoxyuridine 5'-triphosphate nucleotidohydrolase (153 aa).

Residues 71–73 (RSG), Asn84, 88–90 (LID), and Met98 contribute to the substrate site.

This sequence belongs to the dUTPase family. It depends on Mg(2+) as a cofactor.

The catalysed reaction is dUTP + H2O = dUMP + diphosphate + H(+). It participates in pyrimidine metabolism; dUMP biosynthesis; dUMP from dCTP (dUTP route): step 2/2. In terms of biological role, this enzyme is involved in nucleotide metabolism: it produces dUMP, the immediate precursor of thymidine nucleotides and it decreases the intracellular concentration of dUTP so that uracil cannot be incorporated into DNA. The protein is Deoxyuridine 5'-triphosphate nucleotidohydrolase of Wigglesworthia glossinidia brevipalpis.